The following is a 4095-amino-acid chain: Protein adenylyltransferase and cysteine protease IbpA (4095 aa).

The first 97 residues, 1–97, serve as a signal peptide directing secretion; sequence MNKNCYKLIF…MVAAPNFAQS (97 aa). 2 binds bovine IgG2 Fc regions span residues 972 to 1515 and 1116 to 1255; these read SERI…FVKA and SEVQ…FLKE. Disordered stretches follow at residues 1082–1117, 1130–1154, 1204–1223, 1625–1652, and 1705–1732; these read EVSD…LPSE, KEKA…LQSD, QEAL…AKAK, TVSH…TGFT, and EEDE…QKEE. Positions 1087-1096 are enriched in acidic residues; sequence WERDPDEPDE. Composition is skewed to basic and acidic residues over residues 1097–1117 and 1130–1139; these read PDYK…LPSE and KEKAQQKRQA. A coiled-coil region spans residues 1116 to 1247; it reads SEVQDKLRQK…AKDHQIEEAL (132 aa). Over residues 1716 to 1727 the composition is skewed to low complexity; that stretch reads KAKAAPDATDNA. 12 repeat units span residues 2250–2271, 2272–2295, 2296–2317, 2318–2343, 2344–2365, 2366–2387, 2388–2413, 2414–2435, 2436–2457, 2458–2483, 2484–2505, and 2506–2527. The tract at residues 2250-2527 is 12 X 22 AA approximate repeats; it reads YSTLGDQNAN…RTLGGESDSP (278 aa). Composition is skewed to polar residues over residues 2592 to 2611 and 2794 to 2803; these read SDTE…TRNA and TAPQKTSPVK. 6 disordered regions span residues 2592 to 2617, 2765 to 2809, 2825 to 2894, 2914 to 2933, 2943 to 3033, and 3049 to 3069; these read SDTE…PLPP, TIGE…SAEG, AKGQ…SPKR, LKSK…EPIY, LARA…KSED, and NKSQ…PNYD. Residues 2880–2889 show a composition bias toward low complexity; sequence PFPSEFSSEP. 2 stretches are compositionally biased toward polar residues: residues 2977 to 2996 and 3005 to 3018; these read SNLS…QSVA and AESN…QKLQ. Positions 3052–3062 are enriched in basic and acidic residues; sequence QAKEAKSEQET. The Fido 1 domain occupies 3218 to 3355; that stretch reads LTVEMIEKLN…AEVVKEFLTE (138 aa). The yopT-like stretch occupies residues 3222-4095; the sequence is MIEKLNHGLR…FNVVNYKKNN (874 aa). Positions 3354–3698 are binds bovine IgG2 Fc; the sequence is TELGKKSSPQ…VDFINRAKNE (345 aa). 2 disordered regions span residues 3357–3415 and 3432–3454; these read GKKS…PSVP and AELK…ATGV. Composition is skewed to polar residues over residues 3360–3379 and 3388–3401; these read SSPQ…SPVT and VENT…TIKQ. Residues 3443-3454 show a composition bias toward basic and acidic residues; sequence KAAEKSEGATGV. The segment at 3535–3557 is arm region; it reads IPEATVKQMSHLPEFDDILTEGA. Residues 3640-3777 enclose the Fido 2 domain; sequence LTVQMIENLN…SEVVVEFLKE (138 aa). ATP-binding positions include 3670–3671, 3722–3724, Arg-3728, and Gln-3757; these read KE and GNG. Basic and acidic residues predominate over residues 3783 to 3798; it reads SKEDNEQNLEKTDRTS. The disordered stretch occupies residues 3783–3829; that stretch reads SKEDNEQNLEKTDRTSTDLTESAVENSAALSSGTVRSATVSETVTET. Residues 3799–3815 show a composition bias toward polar residues; sequence TDLTESAVENSAALSSG. Over residues 3816–3829 the composition is skewed to low complexity; sequence TVRSATVSETVTET. Catalysis depends on for cysteine protease activity residues Cys-3910, His-4033, and Asp-4048.

It in the central section; belongs to the fic family. This sequence in the C-terminal section; belongs to the peptidase C58 family. As to quaternary structure, immunoglobulin-binding protein. In terms of processing, the long form of the protein is probably processed, and/or the transcript may be subject to differential translational initiation.

The protein localises to the secreted. It is found in the cell outer membrane. It carries out the reaction L-tyrosyl-[protein] + ATP = O-(5'-adenylyl)-L-tyrosyl-[protein] + diphosphate. The enzyme catalyses L-threonyl-[protein] + ATP = 3-O-(5'-adenylyl)-L-threonyl-[protein] + diphosphate. Its function is as follows. Adenylyltransferase involved in virulence by mediating the addition of adenosine 5'-monophosphate (AMP) to specific tyrosine residue of host Rho GTPases RhoA, Rac and Cdc42. The resulting AMPylation inactivates Rho GTPases, thereby inhibiting actin assembly in infected cells. Probably also acts as a cysteine protease, which may play a central role after invasion of host cell and in virulence. Possible member (with IbpB) of a 2 partner secretion. Probably able to bind bovine epithelial cells (host cells). May participate in the formation of fibrils at the surface of the bacteria. This Histophilus somni (strain 2336) (Haemophilus somnus) protein is Protein adenylyltransferase and cysteine protease IbpA (ibpA).